Consider the following 423-residue polypeptide: Histidine--tRNA ligase (423 aa).

Belongs to the class-II aminoacyl-tRNA synthetase family. As to quaternary structure, homodimer.

Its subcellular location is the cytoplasm. The enzyme catalyses tRNA(His) + L-histidine + ATP = L-histidyl-tRNA(His) + AMP + diphosphate + H(+). This Haemophilus influenzae (strain PittEE) protein is Histidine--tRNA ligase.